Consider the following 279-residue polypeptide: Toxin TxP-I (279 aa).

Residues 1 to 14 form the signal peptide; that stretch reads MNLFFLFIIPTILA. Residues 15–27 constitute a propeptide that is removed on maturation; the sequence is VKPFRSFNNISLI.

In terms of processing, contains several disulfide bonds. Posterior glands which appear to be connected with the stylet through a series of ducts.

The protein resides in the secreted. Its function is as follows. Part of a complex mixture of neurotoxins which P.tritici utilizes to capture prey. It has contracting-paralyzing activity in insects. The sequence is that of Toxin TxP-I from Pyemotes tritici (Straw itch mite).